The following is a 123-amino-acid chain: WAP four-disulfide core domain protein 5 (123 aa).

The first 24 residues, M1–G24, serve as a signal peptide directing secretion. WAP domains lie at K27 to I74 and L75 to A121. Cystine bridges form between C34/C62, C41/C66, C49/C61, C55/C70, C81/C109, C88/C113, C96/C108, and C102/C117.

It is found in the secreted. In terms of biological role, putative acid-stable proteinase inhibitor. This chain is WAP four-disulfide core domain protein 5 (WFDC5), found in Lemur catta (Ring-tailed lemur).